The sequence spans 429 residues: Histidine--tRNA ligase (429 aa).

This sequence belongs to the class-II aminoacyl-tRNA synthetase family. Homodimer.

It localises to the cytoplasm. It carries out the reaction tRNA(His) + L-histidine + ATP = L-histidyl-tRNA(His) + AMP + diphosphate + H(+). This Streptococcus pneumoniae (strain 70585) protein is Histidine--tRNA ligase.